Consider the following 345-residue polypeptide: MKSLVLLLCFAQLWGCQSAPQGTGLGFRELACDDPEAEQVALLAVDYLNNHLLQGFKQVLNQIDKVKVWSRRPFGVVYEMEVDTLETTCHALDPTPLANCSVRQLTEHAVEGDCDFHILKQDGQFRVMHTQCHSTPDSAEDVRKLCPRCPLLTPFNDTNVVHTVNTALAAFNTQNNGTYFKLVEISRAQNVPLPVSTLVEFVIAATDCTAKEVTDPAKCNLLAEKQHGFCKANLMHNLGGEEVSVACKLFQTQPQPANANAVGPVPTANAALPADPPASVVVGPVVVPRGLSDHRTYHDLRHAFSPVASVESASGETLHSPKVGQPGAAGPVSPMCPGRIRHFKI.

The first 18 residues, 1-18 (MKSLVLLLCFAQLWGCQS), serve as a signal peptide directing secretion. The Cystatin fetuin-A-type 1 domain maps to 19 to 133 (APQGTGLGFR…QFRVMHTQCH (115 aa)). 6 cysteine pairs are disulfide-bonded: Cys-32/Cys-336, Cys-89/Cys-100, Cys-114/Cys-132, Cys-146/Cys-149, Cys-208/Cys-219, and Cys-230/Cys-247. An N-linked (GlcNAc...) asparagine glycan is attached at Asn-99. Ser-134 carries the phosphoserine modification. Residue Thr-135 is modified to Phosphothreonine. Ser-138 bears the Phosphoserine mark. The region spanning 144 to 250 (KLCPRCPLLT…EEVSVACKLF (107 aa)) is the Cystatin fetuin-A-type 2 domain. N-linked (GlcNAc...) asparagine glycans are attached at residues Asn-156 and Asn-176. A phosphoserine mark is found at Ser-305, Ser-309, Ser-312, and Ser-314. A disordered region spans residues 312 to 334 (SASGETLHSPKVGQPGAAGPVSP).

This sequence belongs to the fetuin family. In terms of processing, phosphorylated by FAM20C in the extracellular medium. In terms of tissue distribution, liver is the major site of synthesis, but fetuin is also expressed in limb buds and other extrahepatic tissues during development.

It localises to the secreted. Functionally, probably involved in differentiation. Its function is as follows. (Microbial infection) Facilitates invasion of hepatocytes by Plasmodium berghei sporozoites. The protein is Alpha-2-HS-glycoprotein (Ahsg) of Mus musculus (Mouse).